The chain runs to 510 residues: ATP synthase subunit alpha (510 aa).

169-176 (GDRQTGKT) provides a ligand contact to ATP.

It belongs to the ATPase alpha/beta chains family. F-type ATPases have 2 components, CF(1) - the catalytic core - and CF(0) - the membrane proton channel. CF(1) has five subunits: alpha(3), beta(3), gamma(1), delta(1), epsilon(1). CF(0) has three main subunits: a(1), b(2) and c(9-12). The alpha and beta chains form an alternating ring which encloses part of the gamma chain. CF(1) is attached to CF(0) by a central stalk formed by the gamma and epsilon chains, while a peripheral stalk is formed by the delta and b chains.

Its subcellular location is the cell inner membrane. The enzyme catalyses ATP + H2O + 4 H(+)(in) = ADP + phosphate + 5 H(+)(out). Produces ATP from ADP in the presence of a proton gradient across the membrane. The alpha chain is a regulatory subunit. This chain is ATP synthase subunit alpha, found in Rickettsia rickettsii (strain Iowa).